Here is a 193-residue protein sequence, read N- to C-terminus: Epididymal-specific lipocalin-12 (193 aa).

The N-terminal stretch at 1-19 (MGPWWALWLILTLPQILGG) is a signal peptide. Cys88 and Cys193 are disulfide-bonded. N-linked (GlcNAc...) asparagine glycosylation is found at Asn143 and Asn172.

Belongs to the calycin superfamily. Lipocalin family. In terms of assembly, monomer.

The protein resides in the secreted. Its function is as follows. Binds all-trans retinoic acid and may act as a retinoid carrier protein within the epididymis. May play a role in male fertility. The sequence is that of Epididymal-specific lipocalin-12 (Lcn12) from Rattus norvegicus (Rat).